A 616-amino-acid chain; its full sequence is Secretogranin-2 (616 aa).

An N-terminal signal peptide occupies residues 1 to 27 (MAEAKTHWLGASLSLILLIFLLATAEA). Residues 28 to 30 (ASF) constitute a propeptide that is removed on maturation. Disordered stretches follow at residues 68-104 (QAHK…RDSL) and 120-146 (AENE…PMDM). Over residues 92 to 104 (ENSDLPESSRDSL) the composition is skewed to basic and acidic residues. Residues 122–140 (NEPQSSLKENKPYTLNSEK) are compositionally biased toward polar residues. Position 150 is a sulfotyrosine (Tyr-150). Ser-173, Ser-267, Ser-431, Ser-531, Ser-554, and Ser-555 each carry phosphoserine. The span at 255–283 (KIESQTQEEVRDSKENIEKNEQINDEMKR) shows a compositional bias: basic and acidic residues. Residues 255–290 (KIESQTQEEVRDSKENIEKNEQINDEMKRSGQMGLQ) are disordered. The segment covering 548–560 (ERLNQHSSQETDK) has biased composition (basic and acidic residues). Residues 548 to 582 (ERLNQHSSQETDKLALVSKRLPVATPKSDDAPNRQ) form a disordered region.

It belongs to the chromogranin/secretogranin protein family. Interacts with Secretogranin III/SCG3.

Its subcellular location is the secreted. Neuroendocrine protein of the granin family that regulates the biogenesis of secretory granules. This Sus scrofa (Pig) protein is Secretogranin-2 (SCG2).